Reading from the N-terminus, the 191-residue chain is Molybdenum cofactor guanylyltransferase (191 aa).

GTP contacts are provided by residues 13-15, lysine 26, aspartate 72, and aspartate 102; that span reads LAG. Aspartate 102 provides a ligand contact to Mg(2+).

This sequence belongs to the MobA family. Monomer. Mg(2+) is required as a cofactor.

It localises to the cytoplasm. The catalysed reaction is Mo-molybdopterin + GTP + H(+) = Mo-molybdopterin guanine dinucleotide + diphosphate. Functionally, transfers a GMP moiety from GTP to Mo-molybdopterin (Mo-MPT) cofactor (Moco or molybdenum cofactor) to form Mo-molybdopterin guanine dinucleotide (Mo-MGD) cofactor. In Pseudomonas putida (strain ATCC 700007 / DSM 6899 / JCM 31910 / BCRC 17059 / LMG 24140 / F1), this protein is Molybdenum cofactor guanylyltransferase.